The primary structure comprises 320 residues: Putative membrane-bound redox modulator Alx (320 aa).

The Periplasmic segment spans residues 1–6 (MNTVGT). A helical transmembrane segment spans residues 7-27 (PLLWGGFAVVVAIMLAIDLLL). The Cytoplasmic segment spans residues 28–43 (QGRRGAHAMTMKQAAA). A helical membrane pass occupies residues 44–64 (WSLVWVTLSLLFNAAFWWYLV). The Periplasmic segment spans residues 65-89 (QTEGRAVADPQALAFLTGYLIEKSL). A helical transmembrane segment spans residues 90–110 (AVDNVFVWLMLFSYFSVPAAL). The Cytoplasmic portion of the chain corresponds to 111 to 113 (QRR). The helical transmembrane segment at 114–134 (VLVYGVLGAIVLRTIMIFTGS) threads the bilayer. W135 is a topological domain (periplasmic). Residues 136–156 (LISQFDWILYIFGAFLLFTGV) traverse the membrane as a helical segment. Over 157–198 (KMALAHEDESGIGDKPLVRWLRGHLRMTDTIDNEHFFVRKNG) the chain is Cytoplasmic. A helical membrane pass occupies residues 199–219 (LLYATPLMLVLILVELSDVIF). Residues 220 to 225 (AVDSIP) lie on the Periplasmic side of the membrane. The helical transmembrane segment at 226–246 (AIFAVTTDPFIVLTSNLFAIL) threads the bilayer. The Cytoplasmic segment spans residues 247-261 (GLRAMYFLLAGVAER). A helical membrane pass occupies residues 262-282 (FSMLKYGLAVILVFIGIKMLI). Residues 283 to 286 (VDFY) lie on the Periplasmic side of the membrane. Residues 287-307 (HIPIAVSLGVVFGILVMTFII) form a helical membrane-spanning segment. The Cytoplasmic portion of the chain corresponds to 308 to 320 (NAWVNYRHDKQRG).

It belongs to the TerC family.

The protein resides in the cell inner membrane. In terms of biological role, has been proposed to be a redox modulator. This chain is Putative membrane-bound redox modulator Alx (alx), found in Shigella flexneri.